A 165-amino-acid chain; its full sequence is Nucleotide-binding protein Ctha_0558 (165 aa).

This sequence belongs to the YajQ family.

Nucleotide-binding protein. The sequence is that of Nucleotide-binding protein Ctha_0558 from Chloroherpeton thalassium (strain ATCC 35110 / GB-78).